The sequence spans 470 residues: ATP synthase subunit beta (470 aa).

Position 151–158 (151–158 (GGAGVGKT)) interacts with ATP.

The protein belongs to the ATPase alpha/beta chains family. As to quaternary structure, F-type ATPases have 2 components, CF(1) - the catalytic core - and CF(0) - the membrane proton channel. CF(1) has five subunits: alpha(3), beta(3), gamma(1), delta(1), epsilon(1). CF(0) has three main subunits: a(1), b(2) and c(9-12). The alpha and beta chains form an alternating ring which encloses part of the gamma chain. CF(1) is attached to CF(0) by a central stalk formed by the gamma and epsilon chains, while a peripheral stalk is formed by the delta and b chains.

The protein localises to the cell membrane. It catalyses the reaction ATP + H2O + 4 H(+)(in) = ADP + phosphate + 5 H(+)(out). Its function is as follows. Produces ATP from ADP in the presence of a proton gradient across the membrane. The catalytic sites are hosted primarily by the beta subunits. The polypeptide is ATP synthase subunit beta (Mycoplasma mobile (strain ATCC 43663 / 163K / NCTC 11711) (Mesomycoplasma mobile)).